Here is a 371-residue protein sequence, read N- to C-terminus: Nicotinate-nucleotide pyrophosphorylase [carboxylating], chloroplastic (371 aa).

A chloroplast-targeting transit peptide spans 1-48 (MPAAAAAAAPPNPNVLQLAPRLRGLVSFPSSYSSSSPFSNRLRLRLPR). Substrate-binding positions include arginine 162, 193–195 (TRK), arginine 217, lysine 227, glutamate 260, aspartate 287, 319–321 (SGN), and 340–342 (SGA).

The protein belongs to the NadC/ModD family.

It is found in the plastid. It localises to the chloroplast. The enzyme catalyses nicotinate beta-D-ribonucleotide + CO2 + diphosphate = quinolinate + 5-phospho-alpha-D-ribose 1-diphosphate + 2 H(+). Its pathway is cofactor biosynthesis; NAD(+) biosynthesis; nicotinate D-ribonucleotide from quinolinate: step 1/1. Functionally, involved in the catabolism of quinolinic acid (QA). The protein is Nicotinate-nucleotide pyrophosphorylase [carboxylating], chloroplastic of Oryza sativa subsp. japonica (Rice).